Here is a 121-residue protein sequence, read N- to C-terminus: Small ribosomal subunit protein uS13 (121 aa).

The segment at 93–121 (RGLPMRGQRTRTNARTRKGPRKSAAALKK) is disordered.

It belongs to the universal ribosomal protein uS13 family. Part of the 30S ribosomal subunit. Forms a loose heterodimer with protein S19. Forms two bridges to the 50S subunit in the 70S ribosome.

Functionally, located at the top of the head of the 30S subunit, it contacts several helices of the 16S rRNA. In the 70S ribosome it contacts the 23S rRNA (bridge B1a) and protein L5 of the 50S subunit (bridge B1b), connecting the 2 subunits; these bridges are implicated in subunit movement. Contacts the tRNAs in the A and P-sites. This is Small ribosomal subunit protein uS13 from Methylibium petroleiphilum (strain ATCC BAA-1232 / LMG 22953 / PM1).